The following is a 448-amino-acid chain: Deoxyguanosinetriphosphate triphosphohydrolase-like protein (448 aa).

Residues 67 to 260 form the HD domain; sequence RLTHSLEVSQ…MELADDIAYG (194 aa).

Belongs to the dGTPase family. Type 2 subfamily.

This chain is Deoxyguanosinetriphosphate triphosphohydrolase-like protein, found in Aliivibrio fischeri (strain ATCC 700601 / ES114) (Vibrio fischeri).